A 229-amino-acid polypeptide reads, in one-letter code: Large ribosomal subunit protein uL1 (229 aa).

Belongs to the universal ribosomal protein uL1 family. As to quaternary structure, part of the 50S ribosomal subunit.

Its function is as follows. Binds directly to 23S rRNA. The L1 stalk is quite mobile in the ribosome, and is involved in E site tRNA release. Functionally, protein L1 is also a translational repressor protein, it controls the translation of the L11 operon by binding to its mRNA. The protein is Large ribosomal subunit protein uL1 of Chlorobium chlorochromatii (strain CaD3).